Consider the following 124-residue polypeptide: Glycine cleavage system H protein (124 aa).

The Lipoyl-binding domain maps to 19–101 (VATVGITNHA…EGEGWLFKME (83 aa)). N6-lipoyllysine is present on Lys60.

It belongs to the GcvH family. In terms of assembly, the glycine cleavage system is composed of four proteins: P, T, L and H. (R)-lipoate is required as a cofactor.

Its function is as follows. The glycine cleavage system catalyzes the degradation of glycine. The H protein shuttles the methylamine group of glycine from the P protein to the T protein. The polypeptide is Glycine cleavage system H protein (Thermotoga maritima (strain ATCC 43589 / DSM 3109 / JCM 10099 / NBRC 100826 / MSB8)).